A 550-amino-acid polypeptide reads, in one-letter code: Arginine--tRNA ligase (550 aa).

Positions 130–140 (ANPTGPIHLGG) match the 'HIGH' region motif.

It belongs to the class-I aminoacyl-tRNA synthetase family. Monomer.

It is found in the cytoplasm. It catalyses the reaction tRNA(Arg) + L-arginine + ATP = L-arginyl-tRNA(Arg) + AMP + diphosphate. The polypeptide is Arginine--tRNA ligase (Corynebacterium diphtheriae (strain ATCC 700971 / NCTC 13129 / Biotype gravis)).